The following is a 199-amino-acid chain: V-type ATP synthase subunit E (199 aa).

It belongs to the V-ATPase E subunit family.

Its function is as follows. Produces ATP from ADP in the presence of a proton gradient across the membrane. The polypeptide is V-type ATP synthase subunit E (Borreliella afzelii (strain PKo) (Borrelia afzelii)).